The primary structure comprises 767 residues: 5-methyltetrahydropteroyltriglutamate--homocysteine methyltransferase (767 aa).

Residues 17 to 20 and lysine 117 contribute to the 5-methyltetrahydropteroyltri-L-glutamate site; that span reads RELK. L-homocysteine-binding positions include 442 to 444 and glutamate 495; that span reads IGS. Residues 442–444 and glutamate 495 contribute to the L-methionine site; that span reads IGS. Residues 526-527 and tryptophan 572 each bind 5-methyltetrahydropteroyltri-L-glutamate; that span reads RC. L-homocysteine is bound at residue aspartate 610. Aspartate 610 provides a ligand contact to L-methionine. A 5-methyltetrahydropteroyltri-L-glutamate-binding site is contributed by glutamate 616. The Zn(2+) site is built by histidine 653, cysteine 655, and glutamate 677. Histidine 706 acts as the Proton donor in catalysis. Cysteine 738 contributes to the Zn(2+) binding site.

Belongs to the vitamin-B12 independent methionine synthase family. Requires Zn(2+) as cofactor.

The catalysed reaction is 5-methyltetrahydropteroyltri-L-glutamate + L-homocysteine = tetrahydropteroyltri-L-glutamate + L-methionine. The protein operates within amino-acid biosynthesis; L-methionine biosynthesis via de novo pathway; L-methionine from L-homocysteine (MetE route): step 1/1. In terms of biological role, catalyzes the transfer of a methyl group from 5-methyltetrahydrofolate to homocysteine resulting in methionine formation. The sequence is that of 5-methyltetrahydropteroyltriglutamate--homocysteine methyltransferase from Bifidobacterium animalis subsp. lactis (strain AD011).